A 543-amino-acid chain; its full sequence is CTP synthase (543 aa).

The interval 1-265 (MARYIFITGG…DDEVLAAFGI (265 aa)) is amidoligase domain. Ser13 is a CTP binding site. Residue Ser13 coordinates UTP. 14 to 19 (SLGKGL) is an ATP binding site. Tyr54 lines the L-glutamine pocket. Residue Asp71 participates in ATP binding. Mg(2+)-binding residues include Asp71 and Glu139. CTP-binding positions include 146–148 (DIE), 186–191 (KTKPTQ), and Lys222. Residues 186–191 (KTKPTQ) and Lys222 each bind UTP. Residue 238 to 240 (RDA) participates in ATP binding. Residues 291 to 542 (TIAIVGKYTG…IQAAVVQSRL (252 aa)) enclose the Glutamine amidotransferase type-1 domain. Gly353 contacts L-glutamine. Cys380 functions as the Nucleophile; for glutamine hydrolysis in the catalytic mechanism. Residues 381-384 (FGMQ), Glu404, and Arg470 each bind L-glutamine. Catalysis depends on residues His515 and Glu517.

This sequence belongs to the CTP synthase family. Homotetramer.

The catalysed reaction is UTP + L-glutamine + ATP + H2O = CTP + L-glutamate + ADP + phosphate + 2 H(+). The enzyme catalyses L-glutamine + H2O = L-glutamate + NH4(+). It catalyses the reaction UTP + NH4(+) + ATP = CTP + ADP + phosphate + 2 H(+). It functions in the pathway pyrimidine metabolism; CTP biosynthesis via de novo pathway; CTP from UDP: step 2/2. Allosterically activated by GTP, when glutamine is the substrate; GTP has no effect on the reaction when ammonia is the substrate. The allosteric effector GTP functions by stabilizing the protein conformation that binds the tetrahedral intermediate(s) formed during glutamine hydrolysis. Inhibited by the product CTP, via allosteric rather than competitive inhibition. Its function is as follows. Catalyzes the ATP-dependent amination of UTP to CTP with either L-glutamine or ammonia as the source of nitrogen. Regulates intracellular CTP levels through interactions with the four ribonucleotide triphosphates. The protein is CTP synthase of Nitrobacter winogradskyi (strain ATCC 25391 / DSM 10237 / CIP 104748 / NCIMB 11846 / Nb-255).